The following is a 626-amino-acid chain: L-amino-acid oxidase 4 (626 aa).

The N-terminal stretch at 1-18 (KSFFRSLVAASLVIVSYS) is a signal peptide. Residue Asn-54 is glycosylated (N-linked (GlcNAc...) asparagine). Residues Gly-75, Glu-94, Ala-95, Arg-102, Met-122, and Arg-123 each contribute to the FAD site. Position 123 (Arg-123) interacts with L-glutamate. Residue Arg-123 participates in L-glutamine binding. Position 123 (Arg-123) interacts with L-lysine. Arg-123 contacts L-phenylalanine. 3 N-linked (GlcNAc...) asparagine glycosylation sites follow: Asn-164, Asn-193, and Asn-331. Val-334 is a binding site for FAD. Tyr-457 is a binding site for L-glutamate. Position 457 (Tyr-457) interacts with L-glutamine. Tyr-457 contributes to the L-lysine binding site. L-phenylalanine is bound at residue Tyr-457. An FAD-binding site is contributed by Glu-551. Ala-558 lines the L-phenylalanine pocket. FAD contacts are provided by Trp-559 and Val-560.

It belongs to the flavin monoamine oxidase family. FIG1 subfamily. In terms of assembly, homodimer. FAD serves as cofactor. Out of the 4 glycosylated residues, Asn-54 is hypermannosylated. The presence of a hypermannosylated N-glycan on Asn-54 leads to adoption of a more active conformation in the absence of acid activation.

Its subcellular location is the secreted. It catalyses the reaction an L-alpha-amino acid + O2 + H2O = a 2-oxocarboxylate + H2O2 + NH4(+). The catalysed reaction is L-lysine + O2 + H2O = 6-amino-2-oxohexanoate + H2O2 + NH4(+). The enzyme catalyses L-glutamate + O2 + H2O = H2O2 + 2-oxoglutarate + NH4(+). It carries out the reaction L-arginine + O2 + H2O = 5-guanidino-2-oxopentanoate + H2O2 + NH4(+). It catalyses the reaction L-leucine + O2 + H2O = 4-methyl-2-oxopentanoate + H2O2 + NH4(+). The catalysed reaction is L-asparagine + O2 + H2O = 2-oxosuccinamate + H2O2 + NH4(+). The enzyme catalyses L-histidine + O2 + H2O = 3-(imidazol-5-yl)pyruvate + H2O2 + NH4(+). It carries out the reaction L-isoleucine + O2 + H2O = (S)-3-methyl-2-oxopentanoate + H2O2 + NH4(+). It catalyses the reaction L-methionine + O2 + H2O = 4-methylsulfanyl-2-oxobutanoate + H2O2 + NH4(+). The catalysed reaction is L-phenylalanine + O2 + H2O = 3-phenylpyruvate + H2O2 + NH4(+). The enzyme catalyses L-tyrosine + O2 + H2O = 3-(4-hydroxyphenyl)pyruvate + H2O2 + NH4(+). It carries out the reaction L-glutamine + O2 + H2O = 2-oxoglutaramate + H2O2 + NH4(+). It catalyses the reaction L-alanine + O2 + H2O = pyruvate + H2O2 + NH4(+). Its activity is regulated as follows. LAAO4 is activated by exposure to acidic pH, the detergent sodium dodecyl sulfate, or freezing. In terms of biological role, catalyzes the oxidative deamination of L-amino acids with molecular oxygen to the corresponding alpha-keto acids and ammonia. L-glutamine shows the highest relative activity but LAAO4 has a broad substrate specificity, including L-amino acids with big aromatic, acidic and basic side chains. Methyl esters of these L-amino acids are also accepted, ethyl esters are converted but with lower activity, whereas D-Amino acids are not converted. No reaction is detected for small polar amino acids such as L-cysteine or L-aspartate, and very little for small, branched hydrophobic amino acids like L-valine. The chain is L-amino-acid oxidase 4 from Hebeloma cylindrosporum.